Reading from the N-terminus, the 267-residue chain is Regulatory protein VirG (267 aa).

Residues histidine 29–leucine 143 form the Response regulatory domain. Residue aspartate 78 is modified to 4-aspartylphosphate. Positions arginine 155–alanine 255 form a DNA-binding region, ompR/PhoB-type.

In terms of processing, phosphorylated by wide host range (WHR) VirA protein.

The protein resides in the cytoplasm. Functionally, virG is required for the positive regulation of at least two vir loci encoded by the Ti plasmid of A.tumefaciens. The protein is Regulatory protein VirG (virG) of Agrobacterium tumefaciens (strain 15955).